Consider the following 130-residue polypeptide: Capsid protein (130 aa).

The viral RNA-binding stretch occupies residues glutamate 31–isoleucine 104.

The protein belongs to the Leviviricetes capsid protein family. As to quaternary structure, homodimer. The capsid proteins form dimers that assemble by group of 5. Twelve such pentamers are linked together with free dimers. The homodimers binds to the viral RNA via an operator hairpin, but also to many other RNA sequences in the viral genome; this interaction probably shifts the virus from the replicative to the assembly phase and ensures specific encapsidation of the viral genome.

It is found in the virion. In terms of biological role, capsid protein self-assembles to form an icosahedral capsid with a T=3 symmetry, about 26 nm in diameter, and consisting of 89 capsid proteins dimers (178 capsid proteins). Involved in viral genome encapsidation through the interaction between a capsid protein dimer and the multiple packaging signals present in the RNA genome. The capsid also contains 1 copy of the A2 maturation protein. Its function is as follows. Acts as a translational repressor of viral replicase synthesis late in infection. This latter function is the result of capsid protein interaction with an RNA hairpin which contains the replicase ribosome-binding site. The protein is Capsid protein of Escherichia coli (Bacteriophage GA).